Consider the following 1138-residue polypeptide: uncharacterized protein (1138 aa).

Positions 1–28 (MKLFPRSILIILVLSFALNLGLVTKTHA) are cleaved as a signal peptide. Transmembrane regions (helical) follow at residues 331–351 (IVTA…LLAG), 359–379 (YINF…INIT), 392–412 (MIQW…SWVM), 494–514 (MLVS…AFMV), 520–540 (CMIS…MFLF), 554–574 (MISF…MFSV), and 699–719 (IKNI…MYNF). Over residues 775 to 784 (DLKAGQGGGV) the composition is skewed to gly residues. Disordered regions lie at residues 775–914 (DLKA…KGTG), 958–977 (GGGR…RTNA), and 995–1071 (ERDN…KQIR). A compositionally biased stretch (low complexity) spans 801-830 (AASGGTSAPTVTTPTASSSVATSSPKTVSS). Positions 838 to 852 (TPPPAPSEAVSPPPA) are enriched in pro residues. Polar residues predominate over residues 854–869 (IRTSISTPAPQSNIET). 4 stretches are compositionally biased toward basic and acidic residues: residues 875-888 (IIRD…KEID), 961-977 (RIRD…RTNA), 995-1032 (ERDN…RKEN), and 1058-1071 (LKEH…KQIR).

The protein belongs to the TrbL/VirB6 family.

It localises to the cell membrane. This is an uncharacterized protein from Rickettsia felis (strain ATCC VR-1525 / URRWXCal2) (Rickettsia azadi).